Here is a 134-residue protein sequence, read N- to C-terminus: Cytochrome b (134 aa).

3 helical membrane-spanning segments follow: residues 33 to 53 (FGSL…FLAI), 77 to 98 (WLLR…YLHV), and 113 to 133 (WNIG…GYVL). 2 residues coordinate heme b: H83 and H97.

The protein belongs to the cytochrome b family. The cytochrome bc1 complex contains 11 subunits: 3 respiratory subunits (MT-CYB, CYC1 and UQCRFS1), 2 core proteins (UQCRC1 and UQCRC2) and 6 low-molecular weight proteins (UQCRH/QCR6, UQCRB/QCR7, UQCRQ/QCR8, UQCR10/QCR9, UQCR11/QCR10 and a cleavage product of UQCRFS1). This cytochrome bc1 complex then forms a dimer. The cofactor is heme b.

It localises to the mitochondrion inner membrane. In terms of biological role, component of the ubiquinol-cytochrome c reductase complex (complex III or cytochrome b-c1 complex) that is part of the mitochondrial respiratory chain. The b-c1 complex mediates electron transfer from ubiquinol to cytochrome c. Contributes to the generation of a proton gradient across the mitochondrial membrane that is then used for ATP synthesis. The polypeptide is Cytochrome b (MT-CYB) (Platyrrhinus helleri (Heller's broad-nosed bat)).